We begin with the raw amino-acid sequence, 339 residues long: 2-deoxy-scyllo-inosamine dehydrogenase (339 aa).

Positions 37, 59, 88, 91, 94, 102, and 143 each coordinate Zn(2+).

Belongs to the zinc-containing alcohol dehydrogenase family. DOIA dehydrogenase subfamily. It depends on Zn(2+) as a cofactor.

It carries out the reaction 2-deoxy-scyllo-inosamine + NADP(+) = 3-amino-2,3-dideoxy-scyllo-inosose + NADPH + H(+). It catalyses the reaction 2-deoxy-scyllo-inosamine + NAD(+) = 3-amino-2,3-dideoxy-scyllo-inosose + NADH + H(+). It participates in metabolic intermediate biosynthesis; 2-deoxystreptamine biosynthesis; 2-deoxystreptamine from D-glucose 6-phosphate: step 3/4. It functions in the pathway antibiotic biosynthesis; tobramycin biosynthesis. Catalyzes the oxidation of 2-deoxy-scyllo-inosamine (DOIA) with NAD(+) or NADP(+), forming 3-amino-2,3-dideoxy-scyllo-inosose (amino-DOI). In Streptoalloteichus tenebrarius (strain ATCC 17920 / DSM 40477 / JCM 4838 / CBS 697.72 / NBRC 16177 / NCIMB 11028 / NRRL B-12390 / A12253. 1 / ISP 5477) (Streptomyces tenebrarius), this protein is 2-deoxy-scyllo-inosamine dehydrogenase (tobE).